The following is a 305-amino-acid chain: FMRFamide-related peptides type HF-4 (305 aa).

The first 19 residues, 1-19 (MTSLCLTIAPAVLSLICLS), serve as a signal peptide directing secretion. A phenylalanine amide mark is found at F36, F47, and F66. I75 is modified (isoleucine amide). Phenylalanine amide is present on residues F84 and F93. Position 102 is an isoleucine amide (I102). Phenylalanine amide is present on residues F111, F120, F129, F138, F147, F156, and F165. A propeptide spanning residues 168 to 305 (SVDGEIEAGV…EHKQEYMRFG (138 aa)) is cleaved from the precursor.

Belongs to the FARP (FMRFamide related peptide) family. As to expression, central nervous system.

The protein localises to the secreted. Functionally, can function as both cardioregulatory hormones and transmitters and may regulate cardiovascular function. The polypeptide is FMRFamide-related peptides type HF-4 (Cornu aspersum (Brown garden snail)).